Here is a 206-residue protein sequence, read N- to C-terminus: ATP-dependent dethiobiotin synthetase BioD (206 aa).

Residue 12 to 17 participates in ATP binding; the sequence is DSGKTL. Thr-16 serves as a coordination point for Mg(2+). Lys-32 is a catalytic residue. Glu-99 is a binding site for Mg(2+). ATP is bound at residue 99 to 102; the sequence is EGAG.

Belongs to the dethiobiotin synthetase family. As to quaternary structure, homodimer. It depends on Mg(2+) as a cofactor.

Its subcellular location is the cytoplasm. The enzyme catalyses (7R,8S)-7,8-diammoniononanoate + CO2 + ATP = (4R,5S)-dethiobiotin + ADP + phosphate + 3 H(+). Its pathway is cofactor biosynthesis; biotin biosynthesis; biotin from 7,8-diaminononanoate: step 1/2. In terms of biological role, catalyzes a mechanistically unusual reaction, the ATP-dependent insertion of CO2 between the N7 and N8 nitrogen atoms of 7,8-diaminopelargonic acid (DAPA, also called 7,8-diammoniononanoate) to form a ureido ring. The protein is ATP-dependent dethiobiotin synthetase BioD of Cytophaga hutchinsonii (strain ATCC 33406 / DSM 1761 / CIP 103989 / NBRC 15051 / NCIMB 9469 / D465).